Reading from the N-terminus, the 155-residue chain is Ribosomal RNA large subunit methyltransferase H (155 aa).

S-adenosyl-L-methionine contacts are provided by residues Leu-73, Gly-104, and 123-128; that span reads LSPLTL.

It belongs to the RNA methyltransferase RlmH family. Homodimer.

Its subcellular location is the cytoplasm. The enzyme catalyses pseudouridine(1915) in 23S rRNA + S-adenosyl-L-methionine = N(3)-methylpseudouridine(1915) in 23S rRNA + S-adenosyl-L-homocysteine + H(+). In terms of biological role, specifically methylates the pseudouridine at position 1915 (m3Psi1915) in 23S rRNA. This is Ribosomal RNA large subunit methyltransferase H from Pseudomonas entomophila (strain L48).